A 682-amino-acid chain; its full sequence is Potassium-transporting ATPase ATP-binding subunit (682 aa).

A run of 4 helical transmembrane segments spans residues 34-54 (PVMF…LAMV), 58-78 (IAGS…TVLF), 219-239 (IALT…TATL), and 254-274 (VLVA…LSAI). D307 acts as the 4-aspartylphosphate intermediate in catalysis. ATP contacts are provided by residues D344, E348, 377 to 384 (FTAQSRMS), and K395. Residues D518 and D522 each contribute to the Mg(2+) site. 3 consecutive transmembrane segments (helical) span residues 588–608 (FAII…LNVM), 616–636 (AILS…PLAL), and 662–682 (LVVP…LGLA).

It belongs to the cation transport ATPase (P-type) (TC 3.A.3) family. Type IA subfamily. In terms of assembly, the system is composed of three essential subunits: KdpA, KdpB and KdpC.

It is found in the cell inner membrane. It catalyses the reaction K(+)(out) + ATP + H2O = K(+)(in) + ADP + phosphate + H(+). Its function is as follows. Part of the high-affinity ATP-driven potassium transport (or Kdp) system, which catalyzes the hydrolysis of ATP coupled with the electrogenic transport of potassium into the cytoplasm. This subunit is responsible for energy coupling to the transport system and for the release of the potassium ions to the cytoplasm. The sequence is that of Potassium-transporting ATPase ATP-binding subunit from Salmonella paratyphi A (strain ATCC 9150 / SARB42).